The primary structure comprises 248 residues: MKSSTQAVLEHTAIPKHIAVIMDGNGRWAKKRFLPRIMGHKRGLDALENMVKHCAKLGVQYLTVFAFSTENWRRPEDEVSFLMGLFLQALQKQVRRLHENNMRLKILGSRERFNRQILQGIEEAEALTANNTGLTLSIAADYGGRWDILQAANKLIAEGVSEITEDTLAKHLMLGDAPEPDLFIRTGGETRISNFLLWQMAYAELYFTDILWPDFDGKALDDAVASFQKRERRFGRTSEQLPIEQQRN.

Residue aspartate 23 is part of the active site. A Mg(2+)-binding site is contributed by aspartate 23. Residues 24–27 (GNGR), tryptophan 28, arginine 36, histidine 40, and 68–70 (STE) contribute to the substrate site. The active-site Proton acceptor is asparagine 71. Substrate is bound by residues tryptophan 72, arginine 74, arginine 185, and 191–193 (RIS). Mg(2+) is bound at residue glutamate 204.

This sequence belongs to the UPP synthase family. As to quaternary structure, homodimer. Mg(2+) is required as a cofactor.

Its function is as follows. Catalyzes the condensation of isopentenyl diphosphate (IPP) with allylic pyrophosphates generating different type of terpenoids. This Neisseria meningitidis serogroup B (strain ATCC BAA-335 / MC58) protein is Isoprenyl transferase.